We begin with the raw amino-acid sequence, 336 residues long: Methionyl-tRNA formyltransferase (336 aa).

Residue Ser-112–Pro-115 participates in (6S)-5,6,7,8-tetrahydrofolate binding.

Belongs to the Fmt family.

It carries out the reaction L-methionyl-tRNA(fMet) + (6R)-10-formyltetrahydrofolate = N-formyl-L-methionyl-tRNA(fMet) + (6S)-5,6,7,8-tetrahydrofolate + H(+). Attaches a formyl group to the free amino group of methionyl-tRNA(fMet). The formyl group appears to play a dual role in the initiator identity of N-formylmethionyl-tRNA by promoting its recognition by IF2 and preventing the misappropriation of this tRNA by the elongation apparatus. In Trichodesmium erythraeum (strain IMS101), this protein is Methionyl-tRNA formyltransferase.